A 169-amino-acid chain; its full sequence is S-ribosylhomocysteine lyase (169 aa).

Fe cation-binding residues include His-54, His-58, and Cys-128.

This sequence belongs to the LuxS family. Homodimer. Fe cation serves as cofactor.

It carries out the reaction S-(5-deoxy-D-ribos-5-yl)-L-homocysteine = (S)-4,5-dihydroxypentane-2,3-dione + L-homocysteine. Involved in the synthesis of autoinducer 2 (AI-2) which is secreted by bacteria and is used to communicate both the cell density and the metabolic potential of the environment. The regulation of gene expression in response to changes in cell density is called quorum sensing. Catalyzes the transformation of S-ribosylhomocysteine (RHC) to homocysteine (HC) and 4,5-dihydroxy-2,3-pentadione (DPD). This is S-ribosylhomocysteine lyase from Shewanella woodyi (strain ATCC 51908 / MS32).